The following is a 349-amino-acid chain: Protein-glutamate methylesterase/protein-glutamine glutaminase (349 aa).

The Response regulatory domain occupies 5-122 (RVLSVDDSAL…REGMLAYSEM (118 aa)). 4-aspartylphosphate is present on Asp56. Residues 152–344 (LLSSEKLIAI…QQMLAKISAG (193 aa)) enclose the CheB-type methylesterase domain. Active-site residues include Ser164, His190, and Asp286.

It belongs to the CheB family. Post-translationally, phosphorylated by CheA. Phosphorylation of the N-terminal regulatory domain activates the methylesterase activity.

The protein resides in the cytoplasm. It catalyses the reaction [protein]-L-glutamate 5-O-methyl ester + H2O = L-glutamyl-[protein] + methanol + H(+). The enzyme catalyses L-glutaminyl-[protein] + H2O = L-glutamyl-[protein] + NH4(+). Functionally, involved in chemotaxis. Part of a chemotaxis signal transduction system that modulates chemotaxis in response to various stimuli. Catalyzes the demethylation of specific methylglutamate residues introduced into the chemoreceptors (methyl-accepting chemotaxis proteins or MCP) by CheR. Also mediates the irreversible deamidation of specific glutamine residues to glutamic acid. This is Protein-glutamate methylesterase/protein-glutamine glutaminase from Salmonella typhi.